A 357-amino-acid chain; its full sequence is Serine/threonine-protein kinase nekl-2 (357 aa).

The Protein kinase domain occupies 4 to 267; sequence YEKVRVVGRG…VSQLLSDPLV (264 aa). Residues 10-18 and Lys35 contribute to the ATP site; that span reads VGRGAFGVC. Catalysis depends on Asp137, which acts as the Proton acceptor. Basic and acidic residues predominate over residues 281-290; the sequence is IEPPPTDKRK. The disordered stretch occupies residues 281–357; sequence IEPPPTDKRK…QSRSQVHSKY (77 aa). Polar residues-rich tracts occupy residues 293–327 and 336–357; these read ASLS…QLTP and FFSS…HSKY.

Belongs to the protein kinase superfamily. NEK Ser/Thr protein kinase family. NIMA subfamily. The cofactor is Mg(2+). Expressed in hypodermal cells including in hyp7 syncytium but not in seam cells.

It is found in the cytoplasm. The enzyme catalyses L-seryl-[protein] + ATP = O-phospho-L-seryl-[protein] + ADP + H(+). The catalysed reaction is L-threonyl-[protein] + ATP = O-phospho-L-threonyl-[protein] + ADP + H(+). Functionally, probable serine/threonine-protein kinase required for the completion of molting. May play a role in endocytosis in the hypodermis syncytium. In Caenorhabditis elegans, this protein is Serine/threonine-protein kinase nekl-2.